An 89-amino-acid polypeptide reads, in one-letter code: Probable Fe(2+)-trafficking protein (89 aa).

This sequence belongs to the Fe(2+)-trafficking protein family.

In terms of biological role, could be a mediator in iron transactions between iron acquisition and iron-requiring processes, such as synthesis and/or repair of Fe-S clusters in biosynthetic enzymes. This Stenotrophomonas maltophilia (strain R551-3) protein is Probable Fe(2+)-trafficking protein.